The following is a 396-amino-acid chain: Proteinase-activated receptor 4 (396 aa).

The first 16 residues, 1-16 (MCWPLLYPLVLGLSIS), serve as a signal peptide directing secretion. Positions 17 to 59 (LAEGIQTPSIYDDVESTRGSHEGPLGPTVELKEPKSSDKPNPR) are cleaved as a propeptide — removed for receptor activation. Residues 28 to 62 (DDVESTRGSHEGPLGPTVELKEPKSSDKPNPRGYP) form a disordered region. Residues 46–57 (ELKEPKSSDKPN) are compositionally biased toward basic and acidic residues. Residues 60–94 (GYPGKFCANDSDTLELPASSQALLLGWVPTRLVPA) lie on the Extracellular side of the membrane. An N-linked (GlcNAc...) asparagine glycan is attached at Asn-68. The helical transmembrane segment at 95–115 (LYGLVVAVGLPANGLALWVLA) threads the bilayer. Topologically, residues 116-120 (TRVPR) are cytoplasmic. The helical transmembrane segment at 121–141 (LPSTILLMNLAVADLLLALVL) threads the bilayer. The Extracellular segment spans residues 142–162 (PPRLAYHLRGQRWPFGEAACR). The cysteines at positions 161 and 240 are disulfide-linked. A helical membrane pass occupies residues 163–183 (VATAALYGHMYGSVLLLAAVS). The Cytoplasmic segment spans residues 184-203 (LDRYLALVHPLRARALRGQR). The helical transmembrane segment at 204-224 (LTTGLCLVAWLSAATLALPLT) threads the bilayer. Topologically, residues 225–255 (LHRQTFRLAGSDRMLCHDALPLTEQTSHWRP) are extracellular. A helical transmembrane segment spans residues 256 to 276 (AFICLAVLGCFVPLLAMGLCY). Topologically, residues 277–295 (GATLRALAANGQRYSHALR) are cytoplasmic. Residues 296–316 (LTALVLFSAVASFTPSNVLLV) traverse the membrane as a helical segment. Over 317-331 (LHYSNPSPEAWGNLY) the chain is Extracellular. The chain crosses the membrane as a helical span at residues 332 to 355 (GAYVPSLALSTLNSCVDPFIYYYV). Residues 356–396 (SHEFREKVRAMLCRQPEASSSSQASREAGSRGTAICSSTLL) lie on the Cytoplasmic side of the membrane.

This sequence belongs to the G-protein coupled receptor 1 family. Post-translationally, a proteolytic cleavage generates a new N-terminus that functions as a tethered ligand. In terms of tissue distribution, highly expressed in the spleen. Slight expression in the heart, lung, skeletal muscle and kidney. No detectable expression in brain, liver or testis. Also detected in platelets.

The protein resides in the cell membrane. Its function is as follows. Receptor for activated thrombin or trypsin coupled to G proteins that stimulate phosphoinositide hydrolysis. May play a role in platelets activation. The polypeptide is Proteinase-activated receptor 4 (F2rl3) (Mus musculus (Mouse)).